The following is a 425-amino-acid chain: Zinc finger protein 789 (425 aa).

The 72-residue stretch at 11 to 82 (LSFEDVAMYF…DLPRTGNRKA (72 aa)) folds into the KRAB domain. C2H2-type zinc fingers lie at residues 201-223 (YECSECGKVIRRKAWFDQHQRIH), 229-251 (FECKVCGQAFRQRSALTVHKQCH), 257-279 (YRCHDCGKCFRQLAYLVEHKRIH), 285-307 (YKCSKCEKTFSQNSTLIRHQVIH), 313-335 (HKCLECGKAFGRHSTLLCHQQIH), 341-363 (HKCSECGQSFGRNVDLIQHQRIH), 369-391 (FQCGECGKTFSFKRNLFRHQVIH), and 397-419 (YQCVICGKSFKWHTSFIKHQGTH).

The protein belongs to the krueppel C2H2-type zinc-finger protein family.

It is found in the nucleus. Functionally, may be involved in transcriptional regulation. The chain is Zinc finger protein 789 (ZNF789) from Homo sapiens (Human).